Consider the following 100-residue polypeptide: Small ribosomal subunit protein uS14c (100 aa).

The protein belongs to the universal ribosomal protein uS14 family. As to quaternary structure, part of the 30S ribosomal subunit.

It localises to the plastid. Its subcellular location is the chloroplast. Functionally, binds 16S rRNA, required for the assembly of 30S particles. The chain is Small ribosomal subunit protein uS14c from Physcomitrium patens (Spreading-leaved earth moss).